A 155-amino-acid polypeptide reads, in one-letter code: Ribosomal RNA large subunit methyltransferase H (155 aa).

2 residues coordinate S-adenosyl-L-methionine: leucine 72 and glycine 104.

The protein belongs to the RNA methyltransferase RlmH family. As to quaternary structure, homodimer.

The protein resides in the cytoplasm. The catalysed reaction is pseudouridine(1915) in 23S rRNA + S-adenosyl-L-methionine = N(3)-methylpseudouridine(1915) in 23S rRNA + S-adenosyl-L-homocysteine + H(+). Specifically methylates the pseudouridine at position 1915 (m3Psi1915) in 23S rRNA. In Fusobacterium nucleatum subsp. nucleatum (strain ATCC 25586 / DSM 15643 / BCRC 10681 / CIP 101130 / JCM 8532 / KCTC 2640 / LMG 13131 / VPI 4355), this protein is Ribosomal RNA large subunit methyltransferase H.